The following is a 186-amino-acid chain: Negative modulator of initiation of replication (186 aa).

Belongs to the SeqA family. In terms of assembly, homodimer. Polymerizes to form helical filaments.

It is found in the cytoplasm. Negative regulator of replication initiation, which contributes to regulation of DNA replication and ensures that replication initiation occurs exactly once per chromosome per cell cycle. Binds to pairs of hemimethylated GATC sequences in the oriC region, thus preventing assembly of replication proteins and re-initiation at newly replicated origins. Repression is relieved when the region becomes fully methylated. This is Negative modulator of initiation of replication from Glaesserella parasuis serovar 5 (strain SH0165) (Haemophilus parasuis).